We begin with the raw amino-acid sequence, 129 residues long: uncharacterized protein (129 aa).

This is an uncharacterized protein from Mycoplasma genitalium (strain ATCC 33530 / DSM 19775 / NCTC 10195 / G37) (Mycoplasmoides genitalium).